A 744-amino-acid polypeptide reads, in one-letter code: Catalase-peroxidase (744 aa).

An N-terminal signal peptide occupies residues 1–22 (MSPRARRCTDRCARMSERSMNA). The tryptophyl-tyrosyl-methioninium (Trp-Tyr) (with M-260) cross-link spans 114–234 (WHSAGTYRLA…LGATEMGLIY (121 aa)). Histidine 115 acts as the Proton acceptor in catalysis. The tryptophyl-tyrosyl-methioninium (Tyr-Met) (with W-114) cross-link spans 234-260 (YVNPEGPDRNGDPISAAKFIRETFARM). Histidine 275 is a binding site for heme b.

The protein belongs to the peroxidase family. Peroxidase/catalase subfamily. As to quaternary structure, homodimer or homotetramer. The cofactor is heme b. Post-translationally, formation of the three residue Trp-Tyr-Met cross-link is important for the catalase, but not the peroxidase activity of the enzyme.

The catalysed reaction is H2O2 + AH2 = A + 2 H2O. It carries out the reaction 2 H2O2 = O2 + 2 H2O. In terms of biological role, bifunctional enzyme with both catalase and broad-spectrum peroxidase activity. This is Catalase-peroxidase from Azorhizobium caulinodans (strain ATCC 43989 / DSM 5975 / JCM 20966 / LMG 6465 / NBRC 14845 / NCIMB 13405 / ORS 571).